A 764-amino-acid polypeptide reads, in one-letter code: Putative wall-associated receptor kinase-like 13 (764 aa).

An N-terminal signal peptide occupies residues 1–26 (MRGNKNYYFLSLLYFLSLPILHFSSC). Residues 27-379 (THKCGDIQIP…HRCIDYHIPE (353 aa)) are Extracellular-facing. Asn78, Asn114, Asn121, Asn164, Asn233, Asn238, Asn259, and Asn283 each carry an N-linked (GlcNAc...) asparagine glycan. Residues 308–372 (CTCDNHIASG…CINTSGGHRC (65 aa)) are atypical EGF-like. 3 disulfides stabilise this stretch: Cys310-Cys323, Cys345-Cys363, and Cys352-Cys372. An N-linked (GlcNAc...) asparagine glycan is attached at Asn365. The chain crosses the membrane as a helical span at residues 380 to 400 (VMLGLGAGFFVLIVGGGIWWW). The Cytoplasmic portion of the chain corresponds to 401–764 (RKLLRKRRMT…SGSTEIARSM (364 aa)). One can recognise a Protein kinase domain in the interval 454 to 728 (FNDNRVIGQG…REVSTALERI (275 aa)). Residues 460–468 (IGQGGQGTV) and Lys482 contribute to the ATP site. Tyr527 is subject to Phosphotyrosine. The active-site Proton acceptor is Asp579. A phosphothreonine mark is found at Thr613 and Thr618. Tyr626 carries the phosphotyrosine modification.

This sequence belongs to the protein kinase superfamily. Ser/Thr protein kinase family.

Its subcellular location is the membrane. The catalysed reaction is L-seryl-[protein] + ATP = O-phospho-L-seryl-[protein] + ADP + H(+). It catalyses the reaction L-threonyl-[protein] + ATP = O-phospho-L-threonyl-[protein] + ADP + H(+). Functionally, putative serine/threonine-protein kinase that may function as a signaling receptor of extracellular matrix component. The chain is Putative wall-associated receptor kinase-like 13 (WAKL13) from Arabidopsis thaliana (Mouse-ear cress).